A 339-amino-acid chain; its full sequence is Annexin A2 (339 aa).

S2 is subject to N-acetylserine. The interval 2-24 is S100A10-binding site; the sequence is STVHEILSKLSLEGDHSLPPSAY. At Y24 the chain carries Phosphotyrosine; by SRC. Position 26 is a phosphothreonine; by PKC (T26). 4 Annexin repeats span residues 33 to 104, 105 to 176, 189 to 261, and 265 to 336; these read FDAD…GLLK, TPSQ…ALAK, ELID…NLVQ, and NKQL…NLCG.

It belongs to the annexin family. Heterotetramer containing 2 light chains of S100A10/p11 and 2 heavy chains of ANXA2/p36.

It is found in the secreted. The protein localises to the extracellular space. The protein resides in the extracellular matrix. It localises to the basement membrane. Its function is as follows. Calcium-regulated membrane-binding protein whose affinity for calcium is greatly enhanced by anionic phospholipids. It binds two calcium ions with high affinity. In Gallus gallus (Chicken), this protein is Annexin A2 (ANXA2).